Reading from the N-terminus, the 276-residue chain is Reaction center protein L chain (276 aa).

3 helical membrane-spanning segments follow: residues 33–56 (GFFG…GAAL), 85–113 (GLWQ…RKLG), and 116–141 (YHIP…VMMG). Residues histidine 154 and histidine 174 each contribute to the (7R,8Z)-bacteriochlorophyll b site. A helical transmembrane segment spans residues 171 to 200 (NPAHMLGITLFFTTCLALALHGSLILSAAN). Histidine 191 serves as a coordination point for Fe cation. Residue phenylalanine 217 coordinates a ubiquinone. The chain crosses the membrane as a helical span at residues 226 to 252 (GTLGIHRVGLILALSAVVWSIICMILS). Histidine 231 contributes to the Fe cation binding site.

The protein belongs to the reaction center PufL/M/PsbA/D family. In terms of assembly, reaction center is composed of four bacteriochlorophylls, two bacteriopheophytins, two ubiquinones, one iron, and three highly hydrophobic polypeptide chains (designated L, M, and H).

The protein localises to the cellular chromatophore membrane. Its function is as follows. The reaction center is a membrane-bound complex that mediates the initial photochemical event in the electron transfer process of photosynthesis. The sequence is that of Reaction center protein L chain (pufL) from Rhodospirillum rubrum.